Here is a 593-residue protein sequence, read N- to C-terminus: ATPase family AAA domain-containing protein 3-B (593 aa).

Disordered stretches follow at residues 1 to 64 (MSWL…LDQS), 109 to 129 (EEKR…AQYQ), and 145 to 164 (QLQN…KQEA). At 1–242 (MSWLFGLNRG…FRTFISDWDK (242 aa)) the chain is on the mitochondrial intermembrane side. Residues 12-27 (PEPPGVPGFPEPPSPP) are compositionally biased toward pro residues. 4 stretches are compositionally biased toward basic and acidic residues: residues 33-44 (GGDKNRPKDKWS), 53-64 (RAAKAARELDQS), 109-121 (EEKR…ETKQ), and 150-164 (ENLR…KQEA). Residues 51–215 (LERAAKAARE…QIRLKAAEHR (165 aa)) adopt a coiled-coil conformation. A helical transmembrane segment spans residues 243 to 260 (VTATVAGLTLLAVGVYTA). Over 261-593 (KNGTGVAGRY…LQPLLEGTPV (333 aa)) the chain is Mitochondrial matrix. Position 348 to 355 (348 to 355 (GPPGTGKT)) interacts with ATP. Basic and acidic residues predominate over residues 570–580 (AEGKESTKEIG). The interval 570-593 (AEGKESTKEIGKNPLQPLLEGTPV) is disordered.

The protein belongs to the AAA ATPase family. In terms of assembly, can form homooligomers. Homodimer formation at the N-terminus may be regulated by ATP and is required for the interaction with the inner surface of the mitochondrial outer membrane and correct mitochondrial homeostasis.

The protein resides in the mitochondrion inner membrane. Its subcellular location is the mitochondrion matrix. It localises to the mitochondrion nucleoid. It catalyses the reaction ATP + H2O = ADP + phosphate + H(+). In terms of biological role, essential for mitochondrial network organization, mitochondrial metabolism and cell growth at organism and cellular level. May play an important role in mitochondrial protein synthesis. May also participate in mitochondrial DNA replication. May bind to mitochondrial DNA D-loops and contribute to nucleoid stability. Required for enhanced channeling of cholesterol for hormone-dependent steroidogenesis. Involved in mitochondrial-mediated antiviral innate immunity. Required to protect mitochondria from the PERK-mediated unfolded protein response: specifically inhibits the activity of EIF2AK3/PERK at mitochondria-endoplasmic reticulum contact sites, thereby providing a safe haven for mitochondrial protein translation during endoplasmic reticulum stress. Ability to inhibit EIF2AK3/PERK is independent of its ATPase activity. Also involved in the mitochondrial DNA damage response by promoting signaling between damaged genomes and the mitochondrial membrane, leading to activation of the integrated stress response (ISR). The sequence is that of ATPase family AAA domain-containing protein 3-B (atad3-b) from Xenopus laevis (African clawed frog).